The sequence spans 210 residues: Beta-crystallin A4 (210 aa).

Positions 1-25 are N-terminal arm; it reads MSGMFSGSISETSGMSLQCTKSAGH. Beta/gamma crystallin 'Greek key' domains are found at residues 26–65 and 66–112; these read WKIV…KVLS and GAWV…RPVA. Residues 113 to 118 are connecting peptide; that stretch reads CANHRD. Beta/gamma crystallin 'Greek key' domains lie at 119 to 160 and 161 to 209; these read SRLT…HVHS and GAWV…RRIQ.

Belongs to the beta/gamma-crystallin family. As to quaternary structure, homo/heterodimer, or complexes of higher-order. The structure of beta-crystallin oligomers seems to be stabilized through interactions between the N-terminal arms.

Crystallins are the dominant structural components of the vertebrate eye lens. The protein is Beta-crystallin A4 (CRYBA4) of Bos taurus (Bovine).